A 427-amino-acid polypeptide reads, in one-letter code: Adenylosuccinate synthetase (427 aa).

GTP-binding positions include 12–18 (GDEGKGK) and 40–42 (GHT). Asp13 acts as the Proton acceptor in catalysis. Positions 13 and 40 each coordinate Mg(2+). Residues 13–16 (DEGK), 38–41 (NAGH), Thr128, Arg142, Gln223, Thr238, and Arg302 contribute to the IMP site. The active-site Proton donor is His41. Residue 298-304 (TTTGRPR) coordinates substrate. GTP is bound by residues Arg304, 330–332 (SID), and 412–414 (SVG).

The protein belongs to the adenylosuccinate synthetase family. As to quaternary structure, homodimer. Mg(2+) is required as a cofactor.

It localises to the cytoplasm. The catalysed reaction is IMP + L-aspartate + GTP = N(6)-(1,2-dicarboxyethyl)-AMP + GDP + phosphate + 2 H(+). It functions in the pathway purine metabolism; AMP biosynthesis via de novo pathway; AMP from IMP: step 1/2. Plays an important role in the de novo pathway of purine nucleotide biosynthesis. Catalyzes the first committed step in the biosynthesis of AMP from IMP. The sequence is that of Adenylosuccinate synthetase from Staphylococcus epidermidis (strain ATCC 12228 / FDA PCI 1200).